The chain runs to 463 residues: L-seryl-tRNA(Sec) selenium transferase (463 aa).

Lysine 294 bears the N6-(pyridoxal phosphate)lysine mark.

Belongs to the SelA family. Pyridoxal 5'-phosphate is required as a cofactor.

Its subcellular location is the cytoplasm. It carries out the reaction L-seryl-tRNA(Sec) + selenophosphate + H(+) = L-selenocysteinyl-tRNA(Sec) + phosphate. The protein operates within aminoacyl-tRNA biosynthesis; selenocysteinyl-tRNA(Sec) biosynthesis; selenocysteinyl-tRNA(Sec) from L-seryl-tRNA(Sec) (bacterial route): step 1/1. Its function is as follows. Converts seryl-tRNA(Sec) to selenocysteinyl-tRNA(Sec) required for selenoprotein biosynthesis. This chain is L-seryl-tRNA(Sec) selenium transferase, found in Hyphomonas neptunium (strain ATCC 15444).